A 648-amino-acid chain; its full sequence is p-hydroxybenzoic acid efflux pump subunit AaeB (648 aa).

11 consecutive transmembrane segments (helical) span residues 11-31, 41-61, 65-87, 91-110, 125-145, 150-170, 369-389, 406-426, 430-450, 458-478, and 481-501; these read FACK…YFGL, AALV…SGAI, GWLR…MLLI, LLMI…LSSL, TALI…QLAL, EIVL…PRSV, LFWL…IAVV, FLMG…LILP, QSLV…GMAV, MGTL…GFPI, and FVDS…VLLV.

It belongs to the aromatic acid exporter ArAE (TC 2.A.85) family.

It localises to the cell inner membrane. In terms of biological role, forms an efflux pump with AaeA. Could function as a metabolic relief valve, allowing to eliminate certain compounds when they accumulate to high levels in the cell. This chain is p-hydroxybenzoic acid efflux pump subunit AaeB, found in Edwardsiella ictaluri (strain 93-146).